The following is a 426-amino-acid chain: MNKLENPLQNDIAGPAPRHRTTQVMVGQVAVGGGAPIVVQSMTNTDTADIQGTIDQVARLSQAGSEMVRITVDRDEAAAAVPHIRDGLRKRGITTPLIGDFHYIGHKLLADYPACAEALDKYRINPGNVGFKNKRDTQFTDIVEIALKNDKAVRIGANWGSLDQELLTKLMDENAVSATPRDVRAVTREAMVQSALLSAARAEEIGLPKTKMILSAKVSSVQDLIAVYQDLASRSDYAIHLGLTEAGMGSKGIVASSAALGILLQQGIGDTIRISLTPEPGGDRTLEVQVAQELLQTMGFRTFVPLVAACPGCGRTTSTTFQELARSIQDFIRVEMPAWKTRYPGVENLNVAVMGCIVNGPGESKHANIGISLPGTGETPAAPVFVDGEKVKTLRGPTIAAEFKAMVIDYIEHKYGAGAPAVTAAE.

Residues cysteine 310, cysteine 313, cysteine 356, and glutamate 363 each contribute to the [4Fe-4S] cluster site.

The protein belongs to the IspG family. The cofactor is [4Fe-4S] cluster.

It catalyses the reaction (2E)-4-hydroxy-3-methylbut-2-enyl diphosphate + oxidized [flavodoxin] + H2O + 2 H(+) = 2-C-methyl-D-erythritol 2,4-cyclic diphosphate + reduced [flavodoxin]. Its pathway is isoprenoid biosynthesis; isopentenyl diphosphate biosynthesis via DXP pathway; isopentenyl diphosphate from 1-deoxy-D-xylulose 5-phosphate: step 5/6. Functionally, converts 2C-methyl-D-erythritol 2,4-cyclodiphosphate (ME-2,4cPP) into 1-hydroxy-2-methyl-2-(E)-butenyl 4-diphosphate. The protein is 4-hydroxy-3-methylbut-2-en-1-yl diphosphate synthase (flavodoxin) of Rhodopseudomonas palustris (strain BisA53).